A 610-amino-acid chain; its full sequence is Zinc metalloproteinase-disintegrin-like VAP1 (610 aa).

Positions 1–20 (MIQVLLVTISLAVFPYQGSS) are cleaved as a signal peptide. A propeptide spanning residues 21 to 189 (VILESGNVND…KKASQSNLTP (169 aa)) is cleaved from the precursor. Pyrrolidone carboxylic acid (Glu) is present on glutamate 190. The region spanning 199–395 (KYVKLFLVAD…NMPQCILKKP (197 aa)) is the Peptidase M12B domain. A glycan (N-linked (GlcNAc...) asparagine) is linked at asparagine 218. 3 disulfide bridges follow: cysteine 310–cysteine 390, cysteine 350–cysteine 374, and cysteine 352–cysteine 357. Histidine 335 is a binding site for Zn(2+). Residues 335-346 (HEMGHNLGMDHD) carry the Metal-binding motif. The Proton acceptor role is filled by glutamate 336. Zn(2+) contacts are provided by histidine 339 and histidine 345. In terms of domain architecture, Disintegrin spans 403–488 (PAVCGNYFVE…AECTDRFQRN (86 aa)). Ca(2+)-binding residues include valine 405, asparagine 408, phenylalanine 410, glutamate 412, glutamate 415, and aspartate 418. Cystine bridges form between cysteine 406-cysteine 435, cysteine 417-cysteine 430, cysteine 419-cysteine 425, cysteine 429-cysteine 452, cysteine 443-cysteine 449, cysteine 448-cysteine 474, cysteine 461-cysteine 481, cysteine 468-cysteine 499, cysteine 492-cysteine 504, cysteine 511-cysteine 561, cysteine 526-cysteine 572, cysteine 539-cysteine 549, cysteine 556-cysteine 598, and cysteine 592-cysteine 603. A D/ECD-tripeptide motif is present at residues 467–469 (ECD). Residues aspartate 469, methionine 470, aspartate 472, aspartate 483, and arginine 484 each contribute to the Ca(2+) site.

Belongs to the venom metalloproteinase (M12B) family. P-III subfamily. P-IIIc sub-subfamily. In terms of assembly, homodimer; disulfide-linked. It depends on Zn(2+) as a cofactor. Post-translationally, the N-terminus is blocked. Expressed by the venom gland.

It is found in the secreted. With respect to regulation, inhibited by EDTA and EGTA, but not by PMSF. In terms of biological role, zinc metalloprotease that has fibrinogenolytic and hemorrhagic activities. It induces apoptosis in vascular endothelial cells (VEC), without degrading extracellular matrix (it cannot cleave collagen) or inhibiting adhesion of VEC. VAP1-induced apoptosis is inhibited by antibodies for integrin alpha-3, alpha-6, beta-1 and CD9. Apoptosis is accompanied by severe cell fragmentation, which is controlled by caspases. This chain is Zinc metalloproteinase-disintegrin-like VAP1, found in Crotalus atrox (Western diamondback rattlesnake).